The primary structure comprises 180 residues: ATP synthase subunit delta (180 aa).

It belongs to the ATPase delta chain family. As to quaternary structure, F-type ATPases have 2 components, F(1) - the catalytic core - and F(0) - the membrane proton channel. F(1) has five subunits: alpha(3), beta(3), gamma(1), delta(1), epsilon(1). CF(0) has four main subunits: a(1), b(1), b'(1) and c(10-14). The alpha and beta chains form an alternating ring which encloses part of the gamma chain. F(1) is attached to F(0) by a central stalk formed by the gamma and epsilon chains, while a peripheral stalk is formed by the delta, b and b' chains.

It is found in the cellular thylakoid membrane. Its function is as follows. F(1)F(0) ATP synthase produces ATP from ADP in the presence of a proton or sodium gradient. F-type ATPases consist of two structural domains, F(1) containing the extramembraneous catalytic core and F(0) containing the membrane proton channel, linked together by a central stalk and a peripheral stalk. During catalysis, ATP synthesis in the catalytic domain of F(1) is coupled via a rotary mechanism of the central stalk subunits to proton translocation. This protein is part of the stalk that links CF(0) to CF(1). It either transmits conformational changes from CF(0) to CF(1) or is implicated in proton conduction. This chain is ATP synthase subunit delta, found in Prochlorococcus marinus (strain AS9601).